Consider the following 59-residue polypeptide: Large ribosomal subunit protein bL33 (59 aa).

The protein belongs to the bacterial ribosomal protein bL33 family.

In Borrelia turicatae (strain 91E135), this protein is Large ribosomal subunit protein bL33.